Here is a 178-residue protein sequence, read N- to C-terminus: Large ribosomal subunit protein uL6 (178 aa).

Belongs to the universal ribosomal protein uL6 family. As to quaternary structure, part of the 50S ribosomal subunit.

This protein binds to the 23S rRNA, and is important in its secondary structure. It is located near the subunit interface in the base of the L7/L12 stalk, and near the tRNA binding site of the peptidyltransferase center. The chain is Large ribosomal subunit protein uL6 from Lactococcus lactis subsp. cremoris (strain MG1363).